The following is a 408-amino-acid chain: MRSSCVLLTALLALAAYYIYIPLPSSVSDPWKLMLLDATFRSAQQVSNLIHFLGLSHHLLALNFIIVSFGKKSAWSSAQVKVTDTDFDGVEVRVFEGPPKPEEPLKRSIVYIHGGGWALASAKIRYYDELCTTMAEELNAVIVSIEYRLVPKVYFPEQIHDVVHATKYFLQPEVLHKYSVDPGRVGISGDSAGGNLAAALGQQFNQDTNLKNKLKVQALIYPVLQALDFNTPSYQQNMNTPILPRYVMVKYWVDYFNGNYDFVQAMIVNNHTSLDVDEASALRARLNWTSLLPTSITKNYKPVMQTTGNSRIVQEIPQLLDARSAPLIADQEVLQHLPKTYILTCEHDVLRDDGIMYAKRLESAGVEVTLDHFEDGFHGCMIFTSWPTNFSVGIRTRNSYIKWLDQNL.

The Cytoplasmic segment spans residues methionine 1–serine 4. Residues cysteine 5–serine 25 traverse the membrane as a helical; Signal-anchor for type II membrane protein segment. The Lumenal portion of the chain corresponds to serine 26–leucine 408. The Involved in the stabilization of the negatively charged intermediate by the formation of the oxyanion hole motif lies at histidine 113–glycine 115. Serine 191 is an active-site residue. Asparagine 270 and asparagine 287 each carry an N-linked (GlcNAc...) asparagine glycan. Active-site residues include aspartate 348 and histidine 378. N-linked (GlcNAc...) asparagine glycosylation occurs at asparagine 389.

This sequence belongs to the 'GDXG' lipolytic enzyme family. Post-translationally, N-glycosylated.

The protein localises to the cell membrane. Its subcellular location is the microsome. The catalysed reaction is a 1-O-alkyl-2-acetyl-sn-glycerol + H2O = a 1-O-alkyl-sn-glycerol + acetate + H(+). It carries out the reaction 1-O-hexadecyl-2-acetyl-sn-glycerol + H2O = 1-O-hexadecyl-sn-glycerol + acetate + H(+). It catalyses the reaction a cholesterol ester + H2O = cholesterol + a fatty acid + H(+). The enzyme catalyses cholesteryl (9Z-octadecenoate) + H2O = cholesterol + (9Z)-octadecenoate + H(+). Its function is as follows. Hydrolyzes 2-acetyl monoalkylglycerol ether (1-O-alkyl-2-acetyl-sn-glycerol), the penultimate precursor of the pathway for de novo synthesis of platelet-activating factor. May be responsible for the hydrolysis of cholesterol esters (such as cholesteryl (9Z-octadecenoate)) in macrophages. Also involved in organ detoxification by hydrolyzing exogenous organophosphorus compounds. The chain is Neutral cholesterol ester hydrolase 1 (NCEH1) from Bos taurus (Bovine).